A 305-amino-acid chain; its full sequence is N-acetylneuraminate lyase (305 aa).

Thr-51 and Thr-52 together coordinate aceneuramate. The active-site Proton donor is Tyr-143. Lys-173 (schiff-base intermediate with substrate) is an active-site residue. Aceneuramate-binding residues include Thr-175, Gly-197, Asp-199, Glu-200, and Ser-216.

The protein belongs to the DapA family. NanA subfamily. In terms of assembly, homotetramer.

The protein localises to the cytoplasm. The catalysed reaction is aceneuramate = aldehydo-N-acetyl-D-mannosamine + pyruvate. It participates in amino-sugar metabolism; N-acetylneuraminate degradation. Its function is as follows. Catalyzes the cleavage of N-acetylneuraminic acid (sialic acid) to form pyruvate and N-acetylmannosamine via a Schiff base intermediate. It prevents sialic acids from being recycled and returning to the cell surface. Involved in the N-glycolylneuraminic acid (Neu5Gc) degradation pathway. The protein is N-acetylneuraminate lyase of Xenopus tropicalis (Western clawed frog).